Reading from the N-terminus, the 86-residue chain is UPF0386 protein RC1_1783 (86 aa).

It belongs to the UPF0386 family.

The chain is UPF0386 protein RC1_1783 from Rhodospirillum centenum (strain ATCC 51521 / SW).